We begin with the raw amino-acid sequence, 389 residues long: Putative 8-amino-7-oxononanoate synthase (389 aa).

Position 22 (arginine 22) interacts with substrate. 109-110 (GY) is a binding site for pyridoxal 5'-phosphate. Histidine 134 is a binding site for substrate. Residues serine 182, 207-210 (DDAH), and 238-241 (TLSK) each bind pyridoxal 5'-phosphate. Lysine 241 carries the N6-(pyridoxal phosphate)lysine modification. Threonine 350 is a substrate binding site.

Belongs to the class-II pyridoxal-phosphate-dependent aminotransferase family. BioF subfamily. In terms of assembly, homodimer. Pyridoxal 5'-phosphate is required as a cofactor.

It catalyses the reaction 6-carboxyhexanoyl-[ACP] + L-alanine + H(+) = (8S)-8-amino-7-oxononanoate + holo-[ACP] + CO2. It functions in the pathway cofactor biosynthesis; biotin biosynthesis. Functionally, catalyzes the decarboxylative condensation of pimeloyl-[acyl-carrier protein] and L-alanine to produce 8-amino-7-oxononanoate (AON), [acyl-carrier protein], and carbon dioxide. In Parvibaculum lavamentivorans (strain DS-1 / DSM 13023 / NCIMB 13966), this protein is Putative 8-amino-7-oxononanoate synthase (bioF).